The primary structure comprises 86 residues: Apolipoprotein C-I (86 aa).

Positions 1–26 (MRLFLSLPVLVVVLLMILEGPGPAQG) are cleaved as a signal peptide.

Belongs to the apolipoprotein C1 family.

The protein resides in the secreted. Functionally, inhibitor of lipoprotein binding to the low density lipoprotein (LDL) receptor, LDL receptor-related protein, and very low density lipoprotein (VLDL) receptor. Associates with high density lipoproteins (HDL) and the triacylglycerol-rich lipoproteins in the plasma and makes up about 10% of the protein of the VLDL and 2% of that of HDL. Appears to interfere directly with fatty acid uptake and is also the major plasma inhibitor of cholesteryl ester transfer protein (CETP). Binds free fatty acids and reduces their intracellular esterification. Modulates the interaction of APOE with beta-migrating VLDL and inhibits binding of beta-VLDL to the LDL receptor-related protein. The chain is Apolipoprotein C-I (APOC1) from Saimiri boliviensis boliviensis (Bolivian squirrel monkey).